The primary structure comprises 309 residues: Calcium homeostasis modulator protein 5 (309 aa).

Over 1–15 (MDAFQSILKFFLNQK) the chain is Cytoplasmic. A helical membrane pass occupies residues 16-37 (TAIGYSFMALLTVGSERLFSLV). 2 residues coordinate a 1,2-diacyl-sn-glycero-3-phosphate: R32 and V37. At 38–45 (AFKCPCSI) the chain is on the extracellular side. 3 cysteine pairs are disulfide-bonded: C41–C127, C43–C158, and C142–C149. Residues 46-70 (ENTAYGLVFLFAPAWVLLILGFFLN) form a helical membrane-spanning segment. Topologically, residues 71 to 99 (NKAWRLFTGCCMNPQKIFPRRRCCRFFYV) are cytoplasmic. Residues 100 to 129 (LGHITLSSLVAPVMWLSVALLNGTFYECAM) traverse the membrane as a helical segment. N121 lines the a 1,2-diacyl-sn-glycero-3-phosphate pocket. Residues 130 to 174 (SGTRSTRLLEMICKGKPKECWEELHKVSCGKSSMAAMDSEEVRLS) are Extracellular-facing. Residues 175–200 (LQAQSQILGWCLICSASFFSLLTTCY) traverse the membrane as a helical segment. Residues 201–309 (ARCRSKVSYL…MILVGTAQSL (109 aa)) are Cytoplasmic-facing. R202 contacts a 1,2-diacyl-sn-glycero-3-phosphate.

It belongs to the CALHM family. As to quaternary structure, oligomerizes to form undecameric cone-shaped channels.

Its subcellular location is the membrane. In terms of biological role, may assemble to form large pore channels with gating and ion conductance likely regulated by membrane lipids. The sequence is that of Calcium homeostasis modulator protein 5 from Rattus norvegicus (Rat).